A 25-amino-acid polypeptide reads, in one-letter code: Pancreatic triacylglycerol lipase (25 aa).

An intrachain disulfide couples cysteine 4 to cysteine 10.

This sequence belongs to the AB hydrolase superfamily. Lipase family. In terms of assembly, forms a 1:1 stoichiometric complex with (pro)colipase/CLPS.

The protein localises to the secreted. The catalysed reaction is a triacylglycerol + H2O = a diacylglycerol + a fatty acid + H(+). It catalyses the reaction 1,2,3-tributanoylglycerol + H2O = dibutanoylglycerol + butanoate + H(+). The enzyme catalyses 1,2,3-tri-(9Z-octadecenoyl)-glycerol + H2O = di-(9Z)-octadecenoylglycerol + (9Z)-octadecenoate + H(+). It carries out the reaction all-trans-retinyl hexadecanoate + H2O = all-trans-retinol + hexadecanoate + H(+). The catalysed reaction is 1,2-di-(9Z-octadecenoyl)-glycerol + H2O = (9Z-octadecenoyl)-glycerol + (9Z)-octadecenoate + H(+). With respect to regulation, inhibited by bile salts, is reactivated by (pro)colipase/CLPS. In terms of biological role, plays an important role in fat metabolism. It preferentially splits the esters of long-chain fatty acids at positions 1 and 3, producing mainly 2-monoacylglycerol and free fatty acids, and shows considerably higher activity against insoluble emulsified substrates than against soluble ones. In Felis catus (Cat), this protein is Pancreatic triacylglycerol lipase (PNLIP).